A 1858-amino-acid chain; its full sequence is Protein dop1 (1858 aa).

A compositionally biased stretch (low complexity) spans 1–23 (MSLDPSSFPRSNSPASSDSSLTR). Disordered regions lie at residues 1–33 (MSLD…EGSL) and 1052–1092 (PPPP…LPSP). The segment covering 1070 to 1079 (TSPSLLSFTS) has biased composition (polar residues). The transactivation stretch occupies residues 1838 to 1854 (NLEACRDDLLADLFNES).

This sequence belongs to the DOP1 family.

The protein localises to the golgi apparatus membrane. In terms of biological role, involved in cellular morphogenesis. Required for traffic between late Golgi and early endosomes, and for the normal structure and organization of the endoplasmic reticulum. During the vegetative phase, contributes to the highly polarized hyphal growth. Required for the reproductive cycle. Involved in conidiophore initiation and differentiation. May have a role in controlling the balance between vegetative proliferation and developmental morphogenesis. This is Protein dop1 (dop1) from Emericella nidulans (strain FGSC A4 / ATCC 38163 / CBS 112.46 / NRRL 194 / M139) (Aspergillus nidulans).